Here is a 276-residue protein sequence, read N- to C-terminus: Undecaprenyl-diphosphatase (276 aa).

The next 8 helical transmembrane spans lie at 6 to 26 (IEIL…WLPI), 49 to 69 (EMFF…MFWN), 89 to 109 (FSLW…GILF), 117 to 137 (LHTP…FIVI), 151 to 171 (LADI…LSLI), 181 to 201 (IIGA…TFFL), 224 to 244 (AELL…VFVI), and 256 to 276 (FKVF…ITAI).

It belongs to the UppP family.

The protein localises to the cell membrane. It carries out the reaction di-trans,octa-cis-undecaprenyl diphosphate + H2O = di-trans,octa-cis-undecaprenyl phosphate + phosphate + H(+). In terms of biological role, catalyzes the dephosphorylation of undecaprenyl diphosphate (UPP). Confers resistance to bacitracin. This is Undecaprenyl-diphosphatase from Enterococcus faecalis (Streptococcus faecalis).